Here is a 313-residue protein sequence, read N- to C-terminus: Protein FixB (313 aa).

255–283 (LYLAVGISGQIQHMVGANASQTIFAINKD) is a binding site for FAD.

The protein belongs to the ETF alpha-subunit/FixB family. Heterodimer of FixA and FixB.

It functions in the pathway amine and polyamine metabolism; carnitine metabolism. Its function is as follows. Required for anaerobic carnitine reduction. May bring reductant to CaiA. This is Protein FixB from Escherichia coli O139:H28 (strain E24377A / ETEC).